The primary structure comprises 64 residues: Large ribosomal subunit protein uL29 (64 aa).

This sequence belongs to the universal ribosomal protein uL29 family.

The chain is Large ribosomal subunit protein uL29 from Lacticaseibacillus paracasei (strain ATCC 334 / BCRC 17002 / CCUG 31169 / CIP 107868 / KCTC 3260 / NRRL B-441) (Lactobacillus paracasei).